Consider the following 246-residue polypeptide: ATP synthase subunit a, chloroplastic (246 aa).

4 helical membrane passes run 35–55, 94–114, 133–153, and 202–222; these read GQVF…ALVG, VPYI…GALI, INVT…AGLS, and VFAL…GLFA.

Belongs to the ATPase A chain family. In terms of assembly, F-type ATPases have 2 components, CF(1) - the catalytic core - and CF(0) - the membrane proton channel. CF(1) has five subunits: alpha(3), beta(3), gamma(1), delta(1), epsilon(1). CF(0) has four main subunits: a, b, b' and c.

It localises to the plastid. The protein localises to the chloroplast thylakoid membrane. Key component of the proton channel; it plays a direct role in the translocation of protons across the membrane. This is ATP synthase subunit a, chloroplastic from Rhodomonas salina (Cryptomonas salina).